Consider the following 406-residue polypeptide: Probable sphingosine-1-phosphate phosphatase (406 aa).

Transmembrane regions (helical) follow at residues 66–86 and 92–112; these read ILGE…CVAT and LCVV…TFTL. The segment at 107–115 is phosphatase sequence motif I; the sequence is KNTFTLPRP. The segment at 133-136 is phosphatase sequence motif II; that stretch reads PSTH. Residue histidine 136 is the Proton donor of the active site. Helical transmembrane passes span 138 to 158 and 162 to 182; these read ASAF…FPTI and FNIS…SVMF. Positions 183–194 are phosphatase sequence motif III; sequence SRLYNGHHTPMD. Histidine 190 functions as the Nucleophile in the catalytic mechanism. A run of 5 helical transmembrane segments spans residues 193 to 213, 225 to 245, 254 to 274, 313 to 333, and 374 to 394; these read MDVI…TYQL, TFLF…FFHP, AYPE…SLWL, ILIG…FFFF, and LFVY…FYYL.

This sequence belongs to the type 2 lipid phosphate phosphatase family.

It localises to the endoplasmic reticulum membrane. Functionally, has enzymatic activity against both sphingosine 1 phosphate (S1P) and dihydro-S1P. Regulates intracellular and extracellular S1P levels. This chain is Probable sphingosine-1-phosphate phosphatase (sppA), found in Dictyostelium discoideum (Social amoeba).